We begin with the raw amino-acid sequence, 159 residues long: Putative ribosomal RNA large subunit methyltransferase H (159 aa).

Residues leucine 76, glycine 108, and 127-132 (FSKMTF) contribute to the S-adenosyl-L-methionine site.

This sequence belongs to the RNA methyltransferase RlmH family.

It localises to the cytoplasm. It carries out the reaction pseudouridine(1915) in 23S rRNA + S-adenosyl-L-methionine = N(3)-methylpseudouridine(1915) in 23S rRNA + S-adenosyl-L-homocysteine + H(+). In terms of biological role, specifically methylates the pseudouridine at position 1915 (m3Psi1915) in 23S rRNA. This is Putative ribosomal RNA large subunit methyltransferase H from Methanococcus maripaludis (strain DSM 14266 / JCM 13030 / NBRC 101832 / S2 / LL).